We begin with the raw amino-acid sequence, 58 residues long: Large ribosomal subunit protein uL30 (58 aa).

It belongs to the universal ribosomal protein uL30 family. As to quaternary structure, part of the 50S ribosomal subunit.

In Parabacteroides distasonis (strain ATCC 8503 / DSM 20701 / CIP 104284 / JCM 5825 / NCTC 11152), this protein is Large ribosomal subunit protein uL30.